The following is a 500-amino-acid chain: MRNWLVLLCPCVLGAALHLWLRLRSPPPACASGAGPADQLALFPQWKSTHYDVVVGVLSARNNHELRNVIRSTWMRHLLQHPTLSQRVLVKFIIGAHGCEVPVEDREDPYSCKLLNITNPVLNQEIEAFSLSEDTSSGLPEDRVVSVSFRVLYPIVITSLGVFYDANDVGFQRNITVKLYQAEQEEALFIARFSPPSCGVQVNKLWYKPVEQFILPESFEGTIVWESQDLHGLVSRNLHKVTVNDGGGVLRVITAGEGALPHEFLEGVEGVAGGFIYTIQEGDALLHNLHSRPQRLIDHIRNLHEEDALLKEESSIYDDIVFVDVVDTYRNVPAKLLNFYRWTVETTSFNLLLKTDDDCYIDLEAVFNRIVQKNLDGPNFWWGNFRLNWAVDRTGKWQELEYPSPAYPAFACGSGYVISKDIVKWLASNSGRLKTYQGEDVSMGIWMAAIGPKRYQDSLWLCEKTCETGMLSSPQYSPWELTELWKLKERCGDPCRCQAR.

Residues 1 to 6 lie on the Cytoplasmic side of the membrane; sequence MRNWLV. A helical; Signal-anchor for type II membrane protein membrane pass occupies residues 7–23; the sequence is LLCPCVLGAALHLWLRL. The Lumenal portion of the chain corresponds to 24–500; that stretch reads RSPPPACASG…CGDPCRCQAR (477 aa). Residues asparagine 116 and asparagine 174 are each glycosylated (N-linked (GlcNAc...) asparagine).

Belongs to the glycosyltransferase 31 family. In terms of processing, N-glycosylated. In terms of tissue distribution, expressed in all tissues examined, but at highest levels in testis, adipose tissue, skeletal muscle and ovary.

It localises to the golgi apparatus membrane. It is found in the endoplasmic reticulum. The enzyme catalyses 3-O-(N-acetyl-beta-D-glucosaminyl-(1-&gt;4)-alpha-D-mannosyl)-L-threonyl-[protein] + UDP-N-acetyl-alpha-D-galactosamine = 3-O-[beta-D-GalNAc-(1-&gt;3)-beta-D-GlcNAc-(1-&gt;4)-alpha-D-Man]-L-Thr-[protein] + UDP + H(+). It participates in protein modification; protein glycosylation. Functionally, beta-1,3-N-acetylgalactosaminyltransferase that synthesizes a unique carbohydrate structure, GalNAc-beta-1-3GlcNAc, on N- and O-glycans. Has no galactose nor galactosaminyl transferase activity toward any acceptor substrate. Involved in alpha-dystroglycan (DAG1) glycosylation: acts coordinately with GTDC2/POMGnT2 to synthesize a GalNAc-beta3-GlcNAc-beta-terminus at the 4-position of protein O-mannose in the biosynthesis of the phosphorylated O-mannosyl trisaccharide (N-acetylgalactosamine-beta-3-N-acetylglucosamine-beta-4-(phosphate-6-)mannose), a carbohydrate structure present in alpha-dystroglycan, which is required for binding laminin G-like domain-containing extracellular proteins with high affinity. This chain is UDP-GalNAc:beta-1,3-N-acetylgalactosaminyltransferase 2 (B3GALNT2), found in Homo sapiens (Human).